The sequence spans 262 residues: Insulin-like growth factor-binding protein 1 (262 aa).

An N-terminal signal peptide occupies residues 1–25; the sequence is MPEVPAVRAWPLLLSLALQLGAAAG. An IGFBP N-terminal domain is found at 28-108; the sequence is QPLHCAPCSA…TRGQGACMPA (81 aa). 6 cysteine pairs are disulfide-bonded: C32–C59, C35–C61, C43–C62, C50–C65, C72–C85, and C79–C105. The interval 101-133 is disordered; the sequence is GQGACMPAPSAEATETKDPAAPETTSPESTEMT. Positions 121-131 are enriched in low complexity; that stretch reads APETTSPESTE. Residues S126, S129, and S147 each carry the phosphoserine modification. At Y161 the chain carries Phosphotyrosine. The 79-residue stretch at 176–254 folds into the Thyroglobulin type-1 domain; the sequence is KEPCQRELYK…STAVRGDPKC (79 aa). Disulfide bonds link C179–C209, C220–C231, and C233–C254. S245 bears the Phosphoserine mark. The Cell attachment site motif lies at 249 to 251; sequence RGD.

As to quaternary structure, binds equally well IGF1 and IGF2. Interacts with integrin ITGA5:ITGB1. Interacts with VHL; this interaction inhibits HIF1A degradation.

It localises to the secreted. Functionally, multifunctional protein that plays a critical role in regulating the availability of IGFs such as IGF1 and IGF2 to their receptors and thereby regulates IGF-mediated cellular processes including cell migration, proliferation, differentiation or apoptosis in a cell-type specific manner. Also plays a positive role in cell migration by interacting with integrin ITGA5:ITGB1 through its RGD motif. Mechanistically, binding to integrins leads to activation of focal adhesion kinase/PTK2 and stimulation of the mitogen-activated protein kinase (MAPK) pathway. Regulates cardiomyocyte apoptosis by suppressing HIF-1alpha/HIF1A degradation through ubiquitination. This is Insulin-like growth factor-binding protein 1 (IGFBP1) from Sus scrofa (Pig).